A 130-amino-acid chain; its full sequence is Phosphoribosyl-AMP cyclohydrolase (130 aa).

Aspartate 77 serves as a coordination point for Mg(2+). Cysteine 78 is a Zn(2+) binding site. The Mg(2+) site is built by aspartate 79 and aspartate 81. Residues cysteine 95 and cysteine 102 each coordinate Zn(2+).

The protein belongs to the PRA-CH family. In terms of assembly, homodimer. Requires Mg(2+) as cofactor. It depends on Zn(2+) as a cofactor.

It localises to the cytoplasm. The enzyme catalyses 1-(5-phospho-beta-D-ribosyl)-5'-AMP + H2O = 1-(5-phospho-beta-D-ribosyl)-5-[(5-phospho-beta-D-ribosylamino)methylideneamino]imidazole-4-carboxamide. It functions in the pathway amino-acid biosynthesis; L-histidine biosynthesis; L-histidine from 5-phospho-alpha-D-ribose 1-diphosphate: step 3/9. Catalyzes the hydrolysis of the adenine ring of phosphoribosyl-AMP. The polypeptide is Phosphoribosyl-AMP cyclohydrolase (Pseudomonas syringae pv. syringae (strain B728a)).